A 3974-amino-acid chain; its full sequence is Hybrid PKS-NRPS synthetase 1 (3974 aa).

The region spanning 5–442 is the Ketosynthase family 3 (KS3) domain; sequence SQKIAIIGSA…GTNAHCLIES (438 aa). Catalysis depends on for beta-ketoacyl synthase activity residues Cys-179, His-316, and His-362. Residues 561 to 883 form a malonyl-CoA:ACP transacylase (MAT) domain region; that stretch reads IFTGQGAQWA…TGILERGLDD (323 aa). Residues 954–1079 are N-terminal hotdog fold; that stretch reads HPLLGSRLSA…HDSELGIPES (126 aa). The segment at 954–1251 is dehydratase (DH) domain; that stretch reads HPLLGSRLSA…QVESVKLVPV (298 aa). Residues 954–1257 form the PKS/mFAS DH domain; the sequence is HPLLGSRLSA…LVPVITPDAS (304 aa). Catalysis depends on His-986, which acts as the Proton acceptor; for dehydratase activity. The segment at 1107–1257 is C-terminal hotdog fold; sequence TTPISSAKIY…LVPVITPDAS (151 aa). Asp-1165 serves as the catalytic Proton donor; for dehydratase activity. The tract at residues 1398–1529 is methyltransferase (MT) domain; it reads PWNTELRNAI…GYLLLVAKTG (132 aa). Residues 2108 to 2282 are ketoreductase (KR) domain; it reads TYFLAGMTDS…ASIMDTGVVT (175 aa). The interval 2492–2516 is disordered; it reads AGRSASPGASCSDRSLSTRSDETRS. Positions 2498–2509 are enriched in polar residues; the sequence is PGASCSDRSLST. Residues 2560-2994 form a condensation (C) domain region; sequence APLSPGQAQL…LERLRTSSDQ (435 aa). The tract at residues 3021–3423 is adenylation (A) (KR) domain; sequence DAMAEKYFDQ…DGSLILLGRM (403 aa). Residues 3537–3613 form the Carrier domain; that stretch reads SADQLVEAEV…EMAEKMASVR (77 aa). Ser-3573 is subject to O-(pantetheine 4'-phosphoryl)serine. The segment at 3657–3940 is reductase (RED) domain; the sequence is VVLTGAADLL…KLEMGEWIAL (284 aa).

It in the C-terminal section; belongs to the NRP synthetase family.

Its pathway is secondary metabolite biosynthesis. Its function is as follows. Hybrid PKS-NRPS synthetase; part of the hps1-dma1 gene cluster that probably mediates the biosynthesis a derivative of cyclopiazonic acid (CPA). The hybrid polyketide synthase-nonribosomal peptide synthetase (PKS-NRPS) nps1 might incorporates acetyl-CoA, malonyl-CoA, and tryptophan (Trp) and utilizes a C-terminal redox-incompetent reductase domain to make and release the tryptophan tetramic acid, cyclo-acetoacetyl-L-tryptophan (c-AATrp), as the first intermediate in the pathway. In addition, the cluster also includes the tryptophan dimethylallyltransferase dma1, the FAD-dependent oxidoreductase toxD, the cytochrome P450 monooxygenase cyp3.1 and the methyltransferase DOTSEDRAFT_139328; the latter 2 being not present in all CPA-producing fungi but involved in additional modifications that occur in biosynthesis the of a range of CPA and CPA-like products. Further studies are required to clarify whether the CPA-like hps1-dma1 cluster is functional or a non-functional relic reflecting evolution of D.septosporum. The sequence is that of Hybrid PKS-NRPS synthetase 1 from Dothistroma septosporum (strain NZE10 / CBS 128990) (Red band needle blight fungus).